A 443-amino-acid chain; its full sequence is ATP-dependent protease ATPase subunit HslU (443 aa).

ATP contacts are provided by residues isoleucine 20, glycine 62–glutamate 67, aspartate 255, glutamate 321, and arginine 393.

The protein belongs to the ClpX chaperone family. HslU subfamily. A double ring-shaped homohexamer of HslV is capped on each side by a ring-shaped HslU homohexamer. The assembly of the HslU/HslV complex is dependent on binding of ATP.

Its subcellular location is the cytoplasm. Functionally, ATPase subunit of a proteasome-like degradation complex; this subunit has chaperone activity. The binding of ATP and its subsequent hydrolysis by HslU are essential for unfolding of protein substrates subsequently hydrolyzed by HslV. HslU recognizes the N-terminal part of its protein substrates and unfolds these before they are guided to HslV for hydrolysis. The chain is ATP-dependent protease ATPase subunit HslU from Helicobacter pylori (strain P12).